Consider the following 136-residue polypeptide: ATP synthase F(0) complex subunit C1, mitochondrial (136 aa).

A mitochondrion-targeting transit peptide spans 1–61; the sequence is MQTTGALLIS…REFQTSVVSR (61 aa). A helical membrane pass occupies residues 77–97; the sequence is VGVAGSGAGIGTVFGSLIIGY. Position 104 is an N6,N6,N6-trimethyllysine (Lys104). Residues 112 to 132 form a helical membrane-spanning segment; it reads ILGFALFEAMGLFCLMVAFLI.

It belongs to the ATPase C chain family. Homooctamer; the c-ring consists of eight c subunits forming a circle, and each subunit adopts a hairpin shape. Component of the ATP synthase complex composed at least of ATP5F1A/subunit alpha, ATP5F1B/subunit beta, ATP5MC1/subunit c (homooctomer), MT-ATP6/subunit a, MT-ATP8/subunit 8, ATP5ME/subunit e, ATP5MF/subunit f, ATP5MG/subunit g, ATP5MK/subunit k, ATP5MJ/subunit j, ATP5F1C/subunit gamma, ATP5F1D/subunit delta, ATP5F1E/subunit epsilon, ATP5PF/subunit F6, ATP5PB/subunit b, ATP5PD/subunit d, ATP5PO/subunit OSCP. ATP synthase complex consists of a soluble F(1) head domain (subunits alpha(3) and beta(3)) - the catalytic core - and a membrane F(0) domain - the membrane proton channel (subunits c, a, 8, e, f, g, k and j). These two domains are linked by a central stalk (subunits gamma, delta, and epsilon) rotating inside the F1 region and a stationary peripheral stalk (subunits F6, b, d, and OSCP). Interacts with TMEM70 (homooligomer form); this interaction facilitates the oligomer formation of subunit c/ATP5MC1 (c-ring) and the c-ring membrane insertion and also protects ATP5MC1 against intramitochondrial proteolysis. In terms of processing, trimethylated by ATPSCKMT at Lys-104. Methylation is required for proper incorporation of the C subunit into the ATP synthase complex and mitochondrial respiration.

The protein resides in the mitochondrion membrane. It carries out the reaction H(+)(in) = H(+)(out). Functionally, subunit c, of the mitochondrial membrane ATP synthase complex (F(1)F(0) ATP synthase or Complex V) that produces ATP from ADP in the presence of a proton gradient across the membrane which is generated by electron transport complexes of the respiratory chain. ATP synthase complex consist of a soluble F(1) head domain - the catalytic core - and a membrane F(1) domain - the membrane proton channel. These two domains are linked by a central stalk rotating inside the F(1) region and a stationary peripheral stalk. During catalysis, ATP synthesis in the catalytic domain of F(1) is coupled via a rotary mechanism of the central stalk subunits to proton translocation. With the subunit a (MT-ATP6), forms the proton-conducting channel in the F(0) domain, that contains two crucial half-channels (inlet and outlet) that facilitate proton movement from the mitochondrial intermembrane space (IMS) into the matrix. Protons are taken up via the inlet half-channel and released through the outlet half-channel, following a Grotthuss mechanism. This chain is ATP synthase F(0) complex subunit C1, mitochondrial, found in Sus scrofa (Pig).